A 143-amino-acid chain; its full sequence is uncharacterized protein (143 aa).

A disordered region spans residues 111 to 143 (VTQDISHTSGKSPTPKAKSSSPKKSKKKNWIPL). Low complexity predominate over residues 119–130 (SGKSPTPKAKSS). Positions 131–143 (SPKKSKKKNWIPL) are enriched in basic residues.

This sequence belongs to the chlamydial CPn_0742/CT_635/TC_0003 family.

This is an uncharacterized protein from Chlamydia muridarum (strain MoPn / Nigg).